The chain runs to 476 residues: Probable flippase AglR (476 aa).

The next 14 helical transmembrane spans lie at 7–29, 34–56, 83–103, 112–132, 146–166, 168–188, 222–242, 246–266, 287–307, 310–330, 354–373, 377–396, 409–429, and 439–459; these read ASAL…TIYV, GVGA…IPAV, VLTG…SPFV, TQLV…LGGL, ALWG…GVGV, ALFY…VYSL, WLDT…IYEV, ISAL…PTIS, VAGV…GDIL, YGPS…LSVV, FRIG…SLIP, VIGA…ILAV, VSAI…LFTI, and IEVV…LLSL.

This sequence belongs to the AglR/Agl15 family.

It localises to the cell membrane. It participates in cell surface structure biogenesis; S-layer biogenesis. Its function is as follows. Involved in the assembly of a N-linked pentasaccharide that decorates the S-layer glycoprotein and flagellins. Probably mediates or contributes to the translocation of the dolichol-phosphate-mannose across the membrane. The chain is Probable flippase AglR (aglR) from Haloferax volcanii (strain ATCC 29605 / DSM 3757 / JCM 8879 / NBRC 14742 / NCIMB 2012 / VKM B-1768 / DS2) (Halobacterium volcanii).